The following is a 559-amino-acid chain: Alpha-(1,6)-fucosyltransferase (559 aa).

Residues 1-4 (MLKC) are Cytoplasmic-facing. The chain crosses the membrane as a helical; Signal-anchor for type II membrane protein span at residues 5–24 (IAAVGTVVWMTMFLFLYSQL). The Lumenal segment spans residues 25 to 559 (SNNQSGGDSI…RKFKFEALLD (535 aa)). Asn-27 carries an N-linked (GlcNAc...) asparagine glycan. Basic and acidic residues predominate over residues 63–74 (QERNDQHKKIME). The disordered stretch occupies residues 63-90 (QERNDQHKKIMEQSHQLPPNPENPSLPK). Residues 80 to 90 (PPNPENPSLPK) show a composition bias toward pro residues. Asn-134 carries N-linked (GlcNAc...) asparagine glycosylation. Disulfide bonds link Cys-188/Cys-251, Cys-196/Cys-214, and Cys-202/Cys-206. The GT23 domain maps to 190 to 480 (EAKTLVCNLD…ADDGSKFHSL (291 aa)). The tract at residues 351–352 (RR) is important for donor substrate binding. An intrachain disulfide couples Cys-452 to Cys-459. The region spanning 489–550 (QQAHEVIVIE…PSYKVVNDWR (62 aa)) is the SH3 domain.

It belongs to the glycosyltransferase 23 family. Requires Mn(2+) as cofactor. The cofactor is Mg(2+).

It is found in the golgi apparatus. It localises to the golgi stack membrane. It catalyses the reaction N(4)-{beta-D-GlcNAc-(1-&gt;2)-alpha-D-Man-(1-&gt;3)-[beta-D-GlcNAc-(1-&gt;2)-alpha-D-Man-(1-&gt;6)]-beta-D-Man-(1-&gt;4)-beta-D-GlcNAc-(1-&gt;4)-beta-D-GlcNAc}-L-asparaginyl-[protein] + GDP-beta-L-fucose = an N(4)-{beta-D-GlcNAc-(1-&gt;2)-alpha-D-Man-(1-&gt;3)-[beta-D-GlcNAc-(1-&gt;2)-alpha-D-Man-(1-&gt;6)]-beta-D-Man-(1-&gt;4)-beta-D-GlcNAc-(1-&gt;4)-[alpha-L-Fuc-(1-&gt;6)]-beta-D-GlcNAc}-L-asparaginyl-[protein] + GDP + H(+). It participates in protein modification; protein glycosylation. Inhibited by Fe(3+), Ni(2+) and Cu(2+). Functionally, catalyzes the addition of fucose in alpha 1-6 linkage to the first GlcNAc residue, next to the peptide chains in N-glycans. The addition is prevented if the GlcNAc residue is already fucosylated. Involved in susceptibility to the nematotoxic C.cinerea galectin Cgl2, likely by contributing to the synthesis of core alpha-1,6-fucosylated N-glycans to which Cgl2 binds. This is Alpha-(1,6)-fucosyltransferase from Caenorhabditis elegans.